The primary structure comprises 120 residues: NAD(P)H-quinone oxidoreductase subunit 3, chloroplastic (120 aa).

Transmembrane regions (helical) follow at residues Ile9–Gly29, Met64–Met84, and Val88–Leu108.

It belongs to the complex I subunit 3 family. In terms of assembly, NDH is composed of at least 16 different subunits, 5 of which are encoded in the nucleus.

The protein localises to the plastid. The protein resides in the chloroplast thylakoid membrane. It catalyses the reaction a plastoquinone + NADH + (n+1) H(+)(in) = a plastoquinol + NAD(+) + n H(+)(out). The catalysed reaction is a plastoquinone + NADPH + (n+1) H(+)(in) = a plastoquinol + NADP(+) + n H(+)(out). NDH shuttles electrons from NAD(P)H:plastoquinone, via FMN and iron-sulfur (Fe-S) centers, to quinones in the photosynthetic chain and possibly in a chloroplast respiratory chain. The immediate electron acceptor for the enzyme in this species is believed to be plastoquinone. Couples the redox reaction to proton translocation, and thus conserves the redox energy in a proton gradient. The sequence is that of NAD(P)H-quinone oxidoreductase subunit 3, chloroplastic from Fagopyrum esculentum subsp. ancestrale (Wild buckwheat).